Consider the following 271-residue polypeptide: MQAACWYVLFLLQPTVYLVTCANLTNGGKSELLKSGSSKSTLKHIWTESSKDLSISRLLSQTFRGKENDTDLDLRYDTPEPYSEQDLWDWLRNSTDLQEPRPRAKRRPIVKTGKFKKMFGWGDFHSNIKTVKLNLLITGKIVDHGNGTFSVYFRHNSTGQGNVSVSLVPPTKIVEFDLAQQTVIDAKDSKSFNCRIEYEKVDKATKNTLCNYDPSKTCYQEQTQSHVSWLCSKPFKVICIYISFYSTDYKLVQKVCPDYNYHSDTPYFPSG.

An N-terminal signal peptide occupies residues 1-21; the sequence is MQAACWYVLFLLQPTVYLVTC. An II region spans residues 22–97; that stretch reads ANLTNGGKSE…WDWLRNSTDL (76 aa). N-linked (GlcNAc...) asparagine glycosylation is found at N23, N68, N93, N146, N156, and N162. Positions 98–176 are III; that stretch reads QEPRPRAKRR…LVPPTKIVEF (79 aa). The tract at residues 177-185 is IV (linker domain); it reads DLAQQTVID. Residues 186-271 form a v (Cys-rich) region; sequence AKDSKSFNCR…HSDTPYFPSG (86 aa).

This sequence belongs to the neurexophilin family.

It is found in the secreted. In terms of biological role, may be signaling molecules that resemble neuropeptides and that act by binding to alpha-neurexins and possibly other receptors. In Homo sapiens (Human), this protein is Neurexophilin-1 (NXPH1).